The following is a 252-amino-acid chain: Membrane protein insertase YidC (252 aa).

Positions 1-20 (MRKKFGIIVALIALTTLLSG) are cleaved as a signal peptide. The N-palmitoyl cysteine moiety is linked to residue C21. C21 carries the S-diacylglycerol cysteine lipid modification. Helical transmembrane passes span 59-79 (YGLA…PLNV), 129-149 (LAGC…YHAI), 160-180 (FLWF…GLFT), 206-226 (IMLY…PAAL), and 228-248 (LYWV…NKPM).

It belongs to the OXA1/ALB3/YidC family. Type 2 subfamily.

Its subcellular location is the cell membrane. Functionally, required for the insertion and/or proper folding and/or complex formation of integral membrane proteins into the membrane. Involved in integration of membrane proteins that insert both dependently and independently of the Sec translocase complex, as well as at least some lipoproteins. This chain is Membrane protein insertase YidC, found in Oceanobacillus iheyensis (strain DSM 14371 / CIP 107618 / JCM 11309 / KCTC 3954 / HTE831).